The chain runs to 436 residues: UDP-N-acetylmuramate--L-alanine ligase (436 aa).

108-114 contacts ATP; that stretch reads GAHGKTS.

This sequence belongs to the MurCDEF family.

The protein localises to the cytoplasm. The enzyme catalyses UDP-N-acetyl-alpha-D-muramate + L-alanine + ATP = UDP-N-acetyl-alpha-D-muramoyl-L-alanine + ADP + phosphate + H(+). The protein operates within cell wall biogenesis; peptidoglycan biosynthesis. Cell wall formation. This Bacillus cereus (strain B4264) protein is UDP-N-acetylmuramate--L-alanine ligase.